The sequence spans 228 residues: 7-cyano-7-deazaguanine synthase (228 aa).

Residue 9–19 participates in ATP binding; that stretch reads YSGGLDSTTCM. Cysteine 189, cysteine 199, cysteine 202, and cysteine 205 together coordinate Zn(2+).

It belongs to the QueC family. Zn(2+) serves as cofactor.

It carries out the reaction 7-carboxy-7-deazaguanine + NH4(+) + ATP = 7-cyano-7-deazaguanine + ADP + phosphate + H2O + H(+). The protein operates within purine metabolism; 7-cyano-7-deazaguanine biosynthesis. In terms of biological role, catalyzes the ATP-dependent conversion of 7-carboxy-7-deazaguanine (CDG) to 7-cyano-7-deazaguanine (preQ(0)). The sequence is that of 7-cyano-7-deazaguanine synthase from Geotalea uraniireducens (strain Rf4) (Geobacter uraniireducens).